We begin with the raw amino-acid sequence, 422 residues long: Beta-1,3-galactosyltransferase 2 (422 aa).

Residues 1–24 (MLQWRRRHCCFAKMTWNAKRSLFR) lie on the Cytoplasmic side of the membrane. The helical; Signal-anchor for type II membrane protein transmembrane segment at 25-45 (THLIGVLSLVFLFAMFLFFNH) threads the bilayer. At 46 to 422 (HDWLPGRAGF…AGRYRHRKLH (377 aa)) the chain is on the lumenal side. N-linked (GlcNAc...) asparagine glycosylation is found at Asn-75, Asn-100, Asn-119, Asn-176, and Asn-226. The segment at 90 to 110 (TLRPQTATNSNNTDLSPQGVT) is disordered.

It belongs to the glycosyltransferase 31 family. Mn(2+) is required as a cofactor.

Its subcellular location is the golgi apparatus membrane. It carries out the reaction an N-acetyl-beta-D-glucosaminyl derivative + UDP-alpha-D-galactose = a beta-D-galactosyl-(1-&gt;3)-N-acetyl-beta-D-glucosaminyl derivative + UDP + H(+). The enzyme catalyses a beta-D-GlcNAc-(1-&gt;3)-beta-D-Gal-(1-&gt;4)-beta-D-Glc-(1&lt;-&gt;1)-Cer(d18:1(4E)) + UDP-alpha-D-galactose = a beta-D-Gal-(1-&gt;3)-beta-D-GlcNAc-(1-&gt;3)-beta-D-Gal-(1-&gt;4)-beta-D-Glc-(1&lt;-&gt;1')-Cer(d18:1(4E)) + UDP + H(+). It catalyses the reaction a neolactoside IV(3)-beta-GlcNAc-nLc4Cer(d18:1(4E)) + UDP-alpha-D-galactose = a neolactoside IV(3)-beta-[Gal-beta-(1-&gt;3)-GlcNAc]-nLc4Cer(d18:1(4E)) + UDP + H(+). Its pathway is protein modification; protein glycosylation. Functionally, beta-1,3-galactosyltransferase that transfers galactose from UDP-galactose to substrates with a terminal beta-N-acetylglucosamine (beta-GlcNAc) residue. Can also utilize substrates with a terminal galactose residue, albeit with lower efficiency. Involved in the biosynthesis of the carbohydrate moieties of glycolipids and glycoproteins. Inactive towards substrates with terminal alpha-N-acetylglucosamine (alpha-GlcNAc) or alpha-N-acetylgalactosamine (alpha-GalNAc) residues. This chain is Beta-1,3-galactosyltransferase 2 (B3GALT2), found in Pongo abelii (Sumatran orangutan).